Reading from the N-terminus, the 167-residue chain is RNA pyrophosphohydrolase (167 aa).

A Nudix hydrolase domain is found at 8 to 158 (PYRRNVGAML…KRDIYRTLVR (151 aa)). A Nudix box motif is present at residues 49–70 (GGIDADEDPEEAVLRELREEIG).

The protein belongs to the Nudix hydrolase family. RppH subfamily. It depends on a divalent metal cation as a cofactor.

Accelerates the degradation of transcripts by removing pyrophosphate from the 5'-end of triphosphorylated RNA, leading to a more labile monophosphorylated state that can stimulate subsequent ribonuclease cleavage. This chain is RNA pyrophosphohydrolase, found in Gluconacetobacter diazotrophicus (strain ATCC 49037 / DSM 5601 / CCUG 37298 / CIP 103539 / LMG 7603 / PAl5).